A 116-amino-acid polypeptide reads, in one-letter code: Large ribosomal subunit protein uL18 (116 aa).

It belongs to the universal ribosomal protein uL18 family. As to quaternary structure, part of the 50S ribosomal subunit; part of the 5S rRNA/L5/L18/L25 subcomplex. Contacts the 5S and 23S rRNAs.

Functionally, this is one of the proteins that bind and probably mediate the attachment of the 5S RNA into the large ribosomal subunit, where it forms part of the central protuberance. The polypeptide is Large ribosomal subunit protein uL18 (Pseudomonas putida (strain W619)).